A 73-amino-acid chain; its full sequence is Ocellatin-PT6 (73 aa).

The first 22 residues, 1–22, serve as a signal peptide directing secretion; the sequence is MAFLKKSLFLVLFLGLVSLSIC. A propeptide spanning residues 23 to 39 is cleaved from the precursor; it reads DEEKRQDEDDDDDDDEE.

As to expression, expressed by the skin glands.

The protein localises to the secreted. Its function is as follows. Has antibacterial activity against Gram-negative bacterium E.coli ATCC 25922 (MIC=120 uM) but not against S.pneumoniae ATCC 700603, S.choleraesuis ATCC 14028 or against Gram-positive bacterium S.aureus ATCC 29313. Shows no hemolytic activity and no cytotoxicity. The polypeptide is Ocellatin-PT6 (Leptodactylus pustulatus (Ceara white-lipped frog)).